We begin with the raw amino-acid sequence, 397 residues long: 3-ketoacyl-CoA thiolase, mitochondrial (397 aa).

The N-terminal 16 residues, methionine 1–proline 16, are a transit peptide targeting the mitochondrion; not cleaved. N6-acetyllysine; alternate is present on lysine 25. Residue lysine 25 is modified to N6-succinyllysine; alternate. N6-succinyllysine is present on lysine 45. The active-site Acyl-thioester intermediate is cysteine 92. Position 119 is a phosphothreonine (threonine 119). Serine 121 is modified (phosphoserine). Tyrosine 127 carries the post-translational modification Phosphotyrosine. Threonine 136 bears the Phosphothreonine mark. An N6-acetyllysine; alternate mark is found at lysine 137, lysine 143, lysine 158, lysine 171, lysine 191, and lysine 209. 6 positions are modified to N6-succinyllysine; alternate: lysine 137, lysine 143, lysine 158, lysine 171, lysine 191, and lysine 209. 3 positions are modified to N6-succinyllysine: lysine 211, lysine 212, and lysine 214. The CoA site is built by arginine 224 and threonine 227. Lysine 240 bears the N6-succinyllysine mark. The residue at position 241 (lysine 241) is an N6-acetyllysine. Serine 251 contributes to the CoA binding site. Lysine 269 and lysine 270 each carry N6-acetyllysine. Lysine 305 is modified (N6-acetyllysine; alternate). Lysine 305 bears the N6-succinyllysine; alternate mark. Serine 310 carries the post-translational modification Phosphoserine. Residue lysine 312 is modified to N6-acetyllysine; alternate. The residue at position 312 (lysine 312) is an N6-succinyllysine; alternate. Phosphoserine is present on serine 333. Lysine 340 carries the post-translational modification N6-acetyllysine. A Phosphoserine modification is found at serine 344. Lysine 375 is modified (N6-acetyllysine). Cysteine 382 functions as the Proton donor/acceptor in the catalytic mechanism.

This sequence belongs to the thiolase-like superfamily. Thiolase family. As to quaternary structure, homotetramer. Interacts with BNIP3. As to expression, expressed in liver, brown adipose tissue and heart (at protein level).

Its subcellular location is the mitochondrion. The enzyme catalyses an acyl-CoA + acetyl-CoA = a 3-oxoacyl-CoA + CoA. The catalysed reaction is 2 acetyl-CoA = acetoacetyl-CoA + CoA. It catalyses the reaction acetyl-CoA + H2O = acetate + CoA + H(+). It carries out the reaction propanoyl-CoA + H2O = propanoate + CoA + H(+). The enzyme catalyses butanoyl-CoA + H2O = butanoate + CoA + H(+). The catalysed reaction is hexanoyl-CoA + H2O = hexanoate + CoA + H(+). It catalyses the reaction octanoyl-CoA + H2O = octanoate + CoA + H(+). It carries out the reaction decanoyl-CoA + H2O = decanoate + CoA + H(+). The enzyme catalyses dodecanoyl-CoA + H2O = dodecanoate + CoA + H(+). The catalysed reaction is tetradecanoyl-CoA + H2O = tetradecanoate + CoA + H(+). It catalyses the reaction hexadecanoyl-CoA + H2O = hexadecanoate + CoA + H(+). It participates in lipid metabolism; fatty acid beta-oxidation. The 3-oxoacetyl-CoA thiolase activity is inhibited by acetyl-CoA while the acetyl-CoA hydrolase activity is inhibited by acetoacetyl-CoA. In the production of energy from fats, this is one of the enzymes that catalyzes the last step of the mitochondrial beta-oxidation pathway, an aerobic process breaking down fatty acids into acetyl-CoA. Using free coenzyme A/CoA, catalyzes the thiolytic cleavage of medium- to long-chain unbranched 3-oxoacyl-CoAs into acetyl-CoA and a fatty acyl-CoA shortened by two carbon atoms. Also catalyzes the condensation of two acetyl-CoA molecules into acetoacetyl-CoA and could be involved in the production of ketone bodies. Also displays hydrolase activity on various fatty acyl-CoAs. Thereby, could be responsible for the production of acetate in a side reaction to beta-oxidation. Abolishes BNIP3-mediated apoptosis and mitochondrial damage. The protein is 3-ketoacyl-CoA thiolase, mitochondrial (Acaa2) of Rattus norvegicus (Rat).